The sequence spans 368 residues: DNA-directed RNA polymerase subunit alpha (368 aa).

Positions 1–231 are alpha N-terminal domain (alpha-NTD); it reads MLWKGFQKPK…DHMNIFINFE (231 aa). Residues 243–368 are alpha C-terminal domain (alpha-CTD); that stretch reads KPEIRNENLN…GFGGDNNPGF (126 aa).

The protein belongs to the RNA polymerase alpha chain family. As to quaternary structure, homodimer. The RNAP catalytic core consists of 2 alpha, 1 beta, 1 beta' and 1 omega subunit. When a sigma factor is associated with the core the holoenzyme is formed, which can initiate transcription.

The enzyme catalyses RNA(n) + a ribonucleoside 5'-triphosphate = RNA(n+1) + diphosphate. DNA-dependent RNA polymerase catalyzes the transcription of DNA into RNA using the four ribonucleoside triphosphates as substrates. The chain is DNA-directed RNA polymerase subunit alpha from Koribacter versatilis (strain Ellin345).